A 199-amino-acid chain; its full sequence is Large ribosomal subunit protein bL9 (199 aa).

Basic and acidic residues predominate over residues 149 to 166 (AEAERINRGEDINSRQED). A disordered region spans residues 149-199 (AEAERINRGEDINSRQEDQDAAAEAIAAAGEFFDPEAQDETPETEAASEQQ). The segment covering 181–191 (FDPEAQDETPE) has biased composition (acidic residues).

The protein belongs to the bacterial ribosomal protein bL9 family.

Binds to the 23S rRNA. The protein is Large ribosomal subunit protein bL9 of Afipia carboxidovorans (strain ATCC 49405 / DSM 1227 / KCTC 32145 / OM5) (Oligotropha carboxidovorans).